A 458-amino-acid chain; its full sequence is Argininosuccinate lyase (458 aa).

Belongs to the lyase 1 family. Argininosuccinate lyase subfamily.

The protein localises to the cytoplasm. The catalysed reaction is 2-(N(omega)-L-arginino)succinate = fumarate + L-arginine. The protein operates within amino-acid biosynthesis; L-arginine biosynthesis; L-arginine from L-ornithine and carbamoyl phosphate: step 3/3. This chain is Argininosuccinate lyase, found in Neisseria meningitidis serogroup C / serotype 2a (strain ATCC 700532 / DSM 15464 / FAM18).